The primary structure comprises 364 residues: Ribosomal RNA large subunit methyltransferase M (364 aa).

Residues S198, 231-234 (APGG), D250, D270, and D286 each bind S-adenosyl-L-methionine. Catalysis depends on K315, which acts as the Proton acceptor.

This sequence belongs to the class I-like SAM-binding methyltransferase superfamily. RNA methyltransferase RlmE family. RlmM subfamily. As to quaternary structure, monomer.

It is found in the cytoplasm. It carries out the reaction cytidine(2498) in 23S rRNA + S-adenosyl-L-methionine = 2'-O-methylcytidine(2498) in 23S rRNA + S-adenosyl-L-homocysteine + H(+). Functionally, catalyzes the 2'-O-methylation at nucleotide C2498 in 23S rRNA. The sequence is that of Ribosomal RNA large subunit methyltransferase M from Thauera aminoaromatica.